The sequence spans 243 residues: Small ribosomal subunit protein uS3 (243 aa).

The KH type-2 domain occupies 39 to 110; the sequence is IRKFIHKKYG…QVRINVVEVE (72 aa). The segment at 217-243 is disordered; the sequence is QQLPVGATPRRRAGRRPQQFEDRSNEG. Residues 234–243 are compositionally biased toward basic and acidic residues; that stretch reads QQFEDRSNEG.

Belongs to the universal ribosomal protein uS3 family. As to quaternary structure, part of the 30S ribosomal subunit. Forms a tight complex with proteins S10 and S14.

Binds the lower part of the 30S subunit head. Binds mRNA in the 70S ribosome, positioning it for translation. The protein is Small ribosomal subunit protein uS3 of Synechococcus sp. (strain WH7803).